Consider the following 297-residue polypeptide: MLDNKDIATPSRTRALLDKYGFNFKKSLGQNFLIDVNIINNIIDASDIDAQTGVIEIGPGMGSLTEQLARHAKRVLAFEIDQRLIPVLNDTLSPYDNVTVINEDILKANIKEAVENHLQDCEKIMVVANLPYYITTPILLNLMQQDIPIDGYVVMMQKEVGERLNAEVGSKAYGSLSIVVQYYTETSKVLTVPKSVFMPPPNVDSIVVKLMQRTEPLVTVDNEEAFFKLAKAAFAQRRKTINNNYQNYFKDGKQHKEVILQWLEQAGIDPRRRGETLSIQDFAKLYEEKKKFPQLEN.

The S-adenosyl-L-methionine site is built by asparagine 31, leucine 33, glycine 58, glutamate 79, aspartate 104, and asparagine 129.

It belongs to the class I-like SAM-binding methyltransferase superfamily. rRNA adenine N(6)-methyltransferase family. RsmA subfamily.

It localises to the cytoplasm. The enzyme catalyses adenosine(1518)/adenosine(1519) in 16S rRNA + 4 S-adenosyl-L-methionine = N(6)-dimethyladenosine(1518)/N(6)-dimethyladenosine(1519) in 16S rRNA + 4 S-adenosyl-L-homocysteine + 4 H(+). Functionally, specifically dimethylates two adjacent adenosines (A1518 and A1519) in the loop of a conserved hairpin near the 3'-end of 16S rRNA in the 30S particle. May play a critical role in biogenesis of 30S subunits. This chain is Ribosomal RNA small subunit methyltransferase A, found in Staphylococcus aureus (strain Mu3 / ATCC 700698).